Reading from the N-terminus, the 399-residue chain is Nicotinate phosphoribosyltransferase (399 aa).

The residue at position 221 (His-221) is a Phosphohistidine; by autocatalysis.

Belongs to the NAPRTase family. In terms of processing, transiently phosphorylated on a His residue during the reaction cycle. Phosphorylation strongly increases the affinity for substrates and increases the rate of nicotinate D-ribonucleotide production. Dephosphorylation regenerates the low-affinity form of the enzyme, leading to product release.

The enzyme catalyses nicotinate + 5-phospho-alpha-D-ribose 1-diphosphate + ATP + H2O = nicotinate beta-D-ribonucleotide + ADP + phosphate + diphosphate. Its pathway is cofactor biosynthesis; NAD(+) biosynthesis; nicotinate D-ribonucleotide from nicotinate: step 1/1. Its function is as follows. Catalyzes the synthesis of beta-nicotinate D-ribonucleotide from nicotinate and 5-phospho-D-ribose 1-phosphate at the expense of ATP. The sequence is that of Nicotinate phosphoribosyltransferase from Buchnera aphidicola subsp. Acyrthosiphon pisum (strain 5A).